The following is a 34-amino-acid chain: Photosystem II reaction center protein M (34 aa).

Residues 7–27 (GFVASLMFILVPAIFLIVLYI) traverse the membrane as a helical segment.

This sequence belongs to the PsbM family. In terms of assembly, PSII is composed of 1 copy each of membrane proteins PsbA, PsbB, PsbC, PsbD, PsbE, PsbF, PsbH, PsbI, PsbJ, PsbK, PsbL, PsbM, PsbT, PsbX, PsbY, PsbZ, Psb30/Ycf12, peripheral proteins PsbO, CyanoQ (PsbQ), PsbU, PsbV and a large number of cofactors. It forms dimeric complexes.

It is found in the cellular thylakoid membrane. In terms of biological role, one of the components of the core complex of photosystem II (PSII). PSII is a light-driven water:plastoquinone oxidoreductase that uses light energy to abstract electrons from H(2)O, generating O(2) and a proton gradient subsequently used for ATP formation. It consists of a core antenna complex that captures photons, and an electron transfer chain that converts photonic excitation into a charge separation. This subunit is found at the monomer-monomer interface. The protein is Photosystem II reaction center protein M of Synechococcus sp. (strain CC9605).